Consider the following 241-residue polypeptide: Homeobox protein TGIF2LX (241 aa).

Disordered regions lie at residues 1 to 58 and 126 to 210; these read MEAA…GNLP and TGKD…SPEE. Residues 21-39 are compositionally biased toward polar residues; that stretch reads AKTQSPAQDTSIMSRNNAD. The segment at residues 48–111 is a DNA-binding region (homeobox; TALE-type); it reads EHKKKRKGNL…INARRRILPD (64 aa). Residues 195–206 are compositionally biased toward low complexity; it reads VSVTSPSSPELV.

The protein belongs to the TALE/TGIF homeobox family. In terms of tissue distribution, specifically expressed in adult testis.

Its subcellular location is the nucleus. May have a transcription role in testis. In Homo sapiens (Human), this protein is Homeobox protein TGIF2LX (TGIF2LX).